A 1282-amino-acid chain; its full sequence is Crescerin-like protein che-12 (1282 aa).

TOG regions lie at residues aspartate 33–glutamate 240 and proline 268–phenylalanine 515. 8 HEAT repeats span residues glutamine 59–serine 96, tyrosine 100–glutamate 137, glutamate 162–asparagine 209, arginine 261–proline 300, proline 308–glycine 345, alanine 349–proline 386, threonine 388–proline 421, and phenylalanine 424–glycine 461. Residues isoleucine 566–alanine 714 form a disordered region. Low complexity-rich tracts occupy residues proline 575–glutamine 592 and serine 633–serine 644. Over residues aspartate 702–alanine 712 the composition is skewed to basic and acidic residues. TOG regions lie at residues asparagine 800 to glutamate 1022 and threonine 1066 to arginine 1282. 7 HEAT repeats span residues aspartate 838–serine 875, serine 879–alanine 917, lysine 919–serine 953, asparagine 961–phenylalanine 998, alanine 1095–lysine 1132, isoleucine 1177–lysine 1214, and glutamine 1219–glutamate 1258.

Belongs to the Crescerin family. In terms of tissue distribution, detected in a subset of amphid neurons that lack wing- or finger-like ciliary extensions. Likewise, detected in phasmid neurons.

The protein resides in the cell projection. Its subcellular location is the cilium. It is found in the perikaryon. The protein localises to the dendrite. In terms of biological role, required for normal structure and function of sensory cilia on amphid neurons, especially for the formation of distal ciliary structures, but is less important for normal assembly of middle and basal ciliary structures. Plays a role in the organization of axoneme microtubule bundles in sensory cilia. Required for normal structure and function of the ASER neuron that mediates attraction to NaCl. Required for normal chemotaxis to NaCl. Required for normal avoidance response to high osmolarity. In contrast, is not required for normal chemotaxis to isoamyl alcohol. Does not play a role in intraflagella transport (IFT). Promotes dauer formation in response to pheromones such as the ascarosides ascr#2, ascr#3, ascr#5, ascr#8 and icas#9. The chain is Crescerin-like protein che-12 from Caenorhabditis elegans.